The primary structure comprises 183 residues: Small ribosomal subunit protein uS4c (183 aa).

One can recognise an S4 RNA-binding domain in the interval 82-143; it reads MRLDNILFRL…KQRSKALIQN (62 aa).

The protein belongs to the universal ribosomal protein uS4 family. As to quaternary structure, part of the 30S ribosomal subunit. Contacts protein S5. The interaction surface between S4 and S5 is involved in control of translational fidelity.

It is found in the plastid. It localises to the chloroplast. One of the primary rRNA binding proteins, it binds directly to 16S rRNA where it nucleates assembly of the body of the 30S subunit. Functionally, with S5 and S12 plays an important role in translational accuracy. The protein is Small ribosomal subunit protein uS4c (rps4) of Gladiolus communis (Cornflag).